The chain runs to 733 residues: MSLITVDQANRVFHLHNQTLSYIFAVEQGGTLSHLYFGGHVDHYHGELRYPRVDRGFSGNLPGSTDRTFSRDTLPKEYSTAGEMDYHLPAAIVRHTDGANALYLVYQGYRIEAGKPKLSGLPAAFVEDETEAETLTIVLVDQVSQVEFDLQYTIYRDRPVVTRSVQVCNQGDHAVNLEKVASMQIDFTDRQFETITLPGAHANERHPERGSINYGIQTFGSLRGTSSHQMNPFLALVDHTTTEFSGDAYGFNLVYSGNHAFELEKDQLDQLHLMVGINSYNFNWQLKAGATFQTPEVLMVYTNKGLNAMSQAYHHLIRERVVRSEFKNQERPIVVNNWEATFFDFNEAKLKPIVDEAKQLGIEMFVLDDGWFGHRDDDNSSLGDWQVDHRKFPQGLNHFVKYVHEQGLKFGIWLEPEMISYDSKLYQQHPDYLMQVPGRSPSPSRNQYILDLGRQAVRNNIFDQLDQLLKSKQIDYIKWDMNRHLSDIYSVALPPERQGEVYHRYVLGLYELLERLTTAYPHILFEGCSGGGGRFDAGMAYYMPQIWASDNTDAVARLTIQYGTSLAYPISLATAHVSVSPNQQTGRETSMSTRSAVAASGVLGYELDLTQLSSADKQIVQKQVVQYKQIRPLIQFGEFYRLKSPITSNQAAWMFVSPQQDEAIVMVFNLTSYAQPSLTKTKLVGLNPKLNYQNIATKAIFGGDELMQLGFYDPVVYQDYTTKVYHFKAVTEN.

The active-site Nucleophile is Asp480. The active-site Proton donor is the Asp550.

This sequence belongs to the glycosyl hydrolase 36 family.

The enzyme catalyses Hydrolysis of terminal, non-reducing alpha-D-galactose residues in alpha-D-galactosides, including galactose oligosaccharides, galactomannans and galactolipids.. Functionally, alpha-galactosidase associated with the raffinose operon. In Pediococcus pentosaceus, this protein is Alpha-galactosidase 1 (agaR).